We begin with the raw amino-acid sequence, 315 residues long: Ribose-phosphate pyrophosphokinase (315 aa).

ATP is bound by residues 37–39 (DGE) and 96–97 (RQ). Mg(2+)-binding residues include H131 and D171. Residue K195 is part of the active site. Residues R197, D221, and 225-229 (DTGGT) each bind D-ribose 5-phosphate.

The protein belongs to the ribose-phosphate pyrophosphokinase family. Class I subfamily. In terms of assembly, homohexamer. Mg(2+) is required as a cofactor.

The protein resides in the cytoplasm. The catalysed reaction is D-ribose 5-phosphate + ATP = 5-phospho-alpha-D-ribose 1-diphosphate + AMP + H(+). It participates in metabolic intermediate biosynthesis; 5-phospho-alpha-D-ribose 1-diphosphate biosynthesis; 5-phospho-alpha-D-ribose 1-diphosphate from D-ribose 5-phosphate (route I): step 1/1. In terms of biological role, involved in the biosynthesis of the central metabolite phospho-alpha-D-ribosyl-1-pyrophosphate (PRPP) via the transfer of pyrophosphoryl group from ATP to 1-hydroxyl of ribose-5-phosphate (Rib-5-P). The sequence is that of Ribose-phosphate pyrophosphokinase from Pasteurella multocida (strain Pm70).